A 123-amino-acid polypeptide reads, in one-letter code: uncharacterized protein (123 aa).

Residues Asn-100 to His-123 form a disordered region.

This is an uncharacterized protein from Acanthamoeba polyphaga mimivirus (APMV).